The sequence spans 540 residues: Zinc finger CCCH domain-containing protein 46 (540 aa).

The C3H1-type zinc finger occupies 148–175; it reads GFGGVPCSYFARGFCKNGASCRFVHSDG. In terms of domain architecture, RRM spans 258–334; it reads RQIYLTFPAD…RVLVKPYKEK (77 aa). Basic and acidic residues-rich tracts occupy residues 337 to 351 and 436 to 450; these read VPDK…EREL and EYDG…SKEG. 3 disordered regions span residues 337-365, 436-469, and 490-514; these read VPDK…DVLG, EYDG…LPDS, and SDLW…SFNS. A Phosphoserine modification is found at Ser-451. The span at 490–511 shows a compositional bias: low complexity; it reads SDLWSPSSDNDDNSTPSTLSDS.

Its function is as follows. Possesses RNA-binding and ribonuclease activities in vitro. This Arabidopsis thaliana (Mouse-ear cress) protein is Zinc finger CCCH domain-containing protein 46.